We begin with the raw amino-acid sequence, 475 residues long: UDP-N-acetylmuramate--L-alanine ligase (475 aa).

An ATP-binding site is contributed by 112–118 (GTHGKTT).

This sequence belongs to the MurCDEF family.

The protein resides in the cytoplasm. It carries out the reaction UDP-N-acetyl-alpha-D-muramate + L-alanine + ATP = UDP-N-acetyl-alpha-D-muramoyl-L-alanine + ADP + phosphate + H(+). It participates in cell wall biogenesis; peptidoglycan biosynthesis. Cell wall formation. This chain is UDP-N-acetylmuramate--L-alanine ligase, found in Paracidovorax citrulli (strain AAC00-1) (Acidovorax citrulli).